A 311-amino-acid chain; its full sequence is E3 ubiquitin-protein ligase RNF126 (311 aa).

Residue Ala2 is modified to N-acetylalanine. At Ser5 the chain carries Phosphoserine. The required for interaction with BAG6 stretch occupies residues Ser5–Ala100. Residues Cys13, Cys16, Cys29, and Cys32 each coordinate Zn(2+). Residues Cys13 to Cys32 form a C4-type zinc finger. 2 disordered regions span residues Glu42 to Pro64 and Pro94 to Thr132. Polar residues predominate over residues Thr47–Ser61. A compositionally biased stretch (basic and acidic residues) spans Asp103 to His116. The span at Pro117 to Thr132 shows a compositional bias: basic residues. The tract at residues Thr200–Asn304 is sufficient for interaction with AICDA. The RING-type zinc-finger motif lies at Cys229–Arg270. The disordered stretch occupies residues Asn277–Ser311. A compositionally biased stretch (low complexity) spans Ser289–Ser311.

Interacts with CCDC50, EGFR, FLT3 and SCAMP3. Interacts with BAG6 (via ubiquitin-like domain); required for BAG6-dependent ubiquitination of proteins mislocalized to the cytosol. Interacts with CDKN1A. Interacts with AICDA. Post-translationally, ubiquitinated. May undergo autoubiquitination. Highly expressed in liver and testis.

It is found in the cytoplasm. The protein localises to the nucleus. It carries out the reaction S-ubiquitinyl-[E2 ubiquitin-conjugating enzyme]-L-cysteine + [acceptor protein]-L-lysine = [E2 ubiquitin-conjugating enzyme]-L-cysteine + N(6)-ubiquitinyl-[acceptor protein]-L-lysine.. The protein operates within protein modification; protein ubiquitination. Functionally, E3 ubiquitin-protein ligase that mediates ubiquitination oF target proteins. Depending on the associated E2 ligase, mediates 'Lys-27'-, 'Lys-29'-, 'Lys-48'- and/or 'Lys-63'-linked polyubiquitination of substrates. Part of a BAG6-dependent quality control process ensuring that proteins of the secretory pathway that are mislocalized to the cytosol are degraded by the proteasome. Probably acts by providing the ubiquitin ligase activity associated with the BAG6 complex and be responsible for ubiquitination of the hydrophobic mislocalized proteins and their targeting to the proteasome. May also play a role in the endosomal recycling of IGF2R, the cation-independent mannose-6-phosphate receptor. May play a role in the endosomal sorting and degradation of several membrane receptors including EGFR, FLT3, MET and CXCR4, by mediating their ubiquitination. By ubiquitinating CDKN1A/p21 and targeting it for degradation, may also promote cell proliferation. May monoubiquitinate AICDA. Acts as a regulator of DNA repair by mediating 'Lys-27'- and 'Lys-29'-linked polyubiquitination of MRE11, thereby promoting the exonuclease activity of MRE11. The polypeptide is E3 ubiquitin-protein ligase RNF126 (Homo sapiens (Human)).